We begin with the raw amino-acid sequence, 644 residues long: Acetyl-coenzyme A synthetase (644 aa).

CoA contacts are provided by residues 190-193 (RGSK) and Thr-308. ATP contacts are provided by residues 384–386 (GEP), 408–413 (DTWWQT), Asp-497, and Arg-512. A CoA-binding site is contributed by Ser-520. ATP is bound at residue Arg-523. Residues Val-534, His-536, and Val-539 each contribute to the Mg(2+) site. Arg-581 contacts CoA. Lys-606 is subject to N6-acetyllysine.

This sequence belongs to the ATP-dependent AMP-binding enzyme family. It depends on Mg(2+) as a cofactor. In terms of processing, acetylated. Deacetylation by the SIR2-homolog deacetylase activates the enzyme.

It carries out the reaction acetate + ATP + CoA = acetyl-CoA + AMP + diphosphate. Catalyzes the conversion of acetate into acetyl-CoA (AcCoA), an essential intermediate at the junction of anabolic and catabolic pathways. AcsA undergoes a two-step reaction. In the first half reaction, AcsA combines acetate with ATP to form acetyl-adenylate (AcAMP) intermediate. In the second half reaction, it can then transfer the acetyl group from AcAMP to the sulfhydryl group of CoA, forming the product AcCoA. The sequence is that of Acetyl-coenzyme A synthetase from Magnetococcus marinus (strain ATCC BAA-1437 / JCM 17883 / MC-1).